A 310-amino-acid chain; its full sequence is Fatty acid elongase 1 (310 aa).

Over methionine 1–arginine 63 the chain is Lumenal. A helical membrane pass occupies residues proline 64–lysine 84. Over serine 85–leucine 100 the chain is Cytoplasmic. The helical transmembrane segment at methionine 101 to valine 121 threads the bilayer. Topologically, residues tyrosine 122–glutamate 141 are lumenal. Residues threonine 142–leucine 163 form a helical membrane-spanning segment. Over lysine 164–tyrosine 174 the chain is Cytoplasmic. A HxxHH motif motif is present at residues histidine 172 to histidine 176. Residues histidine 175–valine 196 form a helical membrane-spanning segment. The Lumenal segment spans residues proline 197–asparagine 201. A helical membrane pass occupies residues leucine 202–tryptophan 223. The Cytoplasmic segment spans residues lysine 224 to glutamine 234. The chain crosses the membrane as a helical span at residues phenylalanine 235–phenylalanine 255. The Lumenal segment spans residues lysine 256–threonine 271. A helical membrane pass occupies residues alanine 272–isoleucine 292. Topologically, residues glutamate 293–asparagine 310 are cytoplasmic. A Di-lysine motif motif is present at residues lysine 304–asparagine 307.

It belongs to the ELO family.

Its subcellular location is the endoplasmic reticulum membrane. The catalysed reaction is a very-long-chain acyl-CoA + malonyl-CoA + H(+) = a very-long-chain 3-oxoacyl-CoA + CO2 + CoA. It catalyses the reaction tetradecanoyl-CoA + malonyl-CoA + H(+) = 3-oxohexadecanoyl-CoA + CO2 + CoA. It carries out the reaction (9Z)-tetradecenoyl-CoA + malonyl-CoA + H(+) = 3-oxo-(11Z)-hexadecenoyl-CoA + CO2 + CoA. In terms of biological role, component of a microsomal membrane bound medium-chain fatty acid elongation system, which extends medium-chain-length fatty acids to long-chain fatty acids. Component of elongase I, which extends 12-16-carbon fatty acyl-CoAs such as lauroyl-CoA to 14-18-carbon fatty acids by incorporation of malonyl-CoA. The protein is Fatty acid elongase 1 of Saccharomyces cerevisiae (strain ATCC 204508 / S288c) (Baker's yeast).